A 194-amino-acid chain; its full sequence is dATP triphosphohydrolase (194 aa).

Residue arginine 17 participates in dATP binding. Residues histidine 32, histidine 71, aspartate 72, glutamate 75, aspartate 80, and aspartate 123 each contribute to the Co(2+) site.

This sequence belongs to the Caudovirales dATP triphosphohydrolase family. It depends on Co(2+) as a cofactor.

It catalyses the reaction dATP + H2O = 2'-deoxyadenosine + triphosphate + H(+). It carries out the reaction dADP + H2O = 2'-deoxyadenosine + diphosphate. The enzyme catalyses dAMP + H2O = 2'-deoxyadenosine + phosphate. In terms of biological role, catalyzes the hydrolysis of dATP, dADP and dAMP into dA. This step is essential for Z-genome synthesis (containing aminoadenine instead of adenine). Specifically removes dATP and its precursor dADP from the nucleotide pool of the host, preventing the incorporation of A into the phage genome and favoring the integration of the Z-base into the viral genome. This is dATP triphosphohydrolase (datZ) from Salmonella phage PMBT28.